A 427-amino-acid polypeptide reads, in one-letter code: Glutamate-1-semialdehyde 2,1-aminomutase (427 aa).

Lys265 carries the N6-(pyridoxal phosphate)lysine modification.

The protein belongs to the class-III pyridoxal-phosphate-dependent aminotransferase family. HemL subfamily. Homodimer. Pyridoxal 5'-phosphate is required as a cofactor.

The protein resides in the cytoplasm. The catalysed reaction is (S)-4-amino-5-oxopentanoate = 5-aminolevulinate. It functions in the pathway porphyrin-containing compound metabolism; protoporphyrin-IX biosynthesis; 5-aminolevulinate from L-glutamyl-tRNA(Glu): step 2/2. The protein is Glutamate-1-semialdehyde 2,1-aminomutase of Neisseria meningitidis serogroup B (strain ATCC BAA-335 / MC58).